The primary structure comprises 142 residues: MAKKVQAYVKLQVAAGMANPSPPVGPALGQQGVNIMEFCKAFNAKTESLEKGLPTPVVITVYSDRSFTFVTKTPPAAVLLKKAAGIKSGSGKPNKDKVGKVSRAQVREIAETKAADMTGADIEAMTRSIEGTARSMGLVVED.

The protein belongs to the universal ribosomal protein uL11 family. As to quaternary structure, part of the ribosomal stalk of the 50S ribosomal subunit. Interacts with L10 and the large rRNA to form the base of the stalk. L10 forms an elongated spine to which L12 dimers bind in a sequential fashion forming a multimeric L10(L12)X complex. Post-translationally, one or more lysine residues are methylated.

Its function is as follows. Forms part of the ribosomal stalk which helps the ribosome interact with GTP-bound translation factors. The protein is Large ribosomal subunit protein uL11 of Erwinia tasmaniensis (strain DSM 17950 / CFBP 7177 / CIP 109463 / NCPPB 4357 / Et1/99).